Reading from the N-terminus, the 138-residue chain is Calmodulin-beta (138 aa).

EF-hand domains follow at residues Glu1–Asn32, Pro33–Glu68, Asp70–Lys105, and Leu106–Lys138. Ca(2+) is bound by residues Asp10, Asp12, Asp14, Thr16, Glu21, Asp46, Asp48, Asn50, Thr52, Glu57, Asp83, Asp85, Asn87, Glu94, Asp119, Asp121, Asp123, Gln125, and Glu130.

This sequence belongs to the calmodulin family.

In terms of biological role, calmodulin mediates the control of a large number of enzymes, ion channels and other proteins by Ca(2+). Among the enzymes to be stimulated by the calmodulin-Ca(2+) complex are a number of protein kinases and phosphatases. The protein is Calmodulin-beta of Arbacia punctulata (Punctuate sea urchin).